The sequence spans 391 residues: S-adenosylmethionine synthase (391 aa).

His-19 lines the ATP pocket. Asp-21 lines the Mg(2+) pocket. K(+) is bound at residue Glu-47. L-methionine is bound by residues Glu-60 and Gln-103. The flexible loop stretch occupies residues 103–113; that stretch reads QSPDIAQGVDR. Residues 168–170, 236–237, Asp-245, 251–252, Ala-268, and Lys-272 contribute to the ATP site; these read DGK, RF, and RK. Position 245 (Asp-245) interacts with L-methionine. Lys-276 is a binding site for L-methionine.

This sequence belongs to the AdoMet synthase family. Homotetramer; dimer of dimers. Requires Mg(2+) as cofactor. K(+) serves as cofactor.

The protein localises to the cytoplasm. The enzyme catalyses L-methionine + ATP + H2O = S-adenosyl-L-methionine + phosphate + diphosphate. The protein operates within amino-acid biosynthesis; S-adenosyl-L-methionine biosynthesis; S-adenosyl-L-methionine from L-methionine: step 1/1. Functionally, catalyzes the formation of S-adenosylmethionine (AdoMet) from methionine and ATP. The overall synthetic reaction is composed of two sequential steps, AdoMet formation and the subsequent tripolyphosphate hydrolysis which occurs prior to release of AdoMet from the enzyme. The chain is S-adenosylmethionine synthase from Oleidesulfovibrio alaskensis (strain ATCC BAA-1058 / DSM 17464 / G20) (Desulfovibrio alaskensis).